A 474-amino-acid polypeptide reads, in one-letter code: Glutamine synthetase (474 aa).

A GS beta-grasp domain is found at 15-99 (EDVQFIDVRF…MTFFIHDPIT (85 aa)). One can recognise a GS catalytic domain in the interval 107–474 (PRNIAKKAET…PYEFTLYYDI (368 aa)). The Mg(2+) site is built by E132 and E134. An ATP-binding site is contributed by E210. Residues E215 and E223 each contribute to the Mg(2+) site. L-glutamate contacts are provided by residues 267–268 (NG) and G268. H272 lines the Mg(2+) pocket. ATP is bound by residues 274-276 (HSS) and S276. R325, E331, and R343 together coordinate L-glutamate. ATP-binding residues include R343, R348, and K357. Residue E362 participates in Mg(2+) binding. R364 provides a ligand contact to L-glutamate. Y402 carries the post-translational modification O-AMP-tyrosine.

The protein belongs to the glutamine synthetase family. Oligomer of 12 subunits arranged in the form of two hexagons. Mg(2+) is required as a cofactor.

Its subcellular location is the cytoplasm. The enzyme catalyses L-glutamate + NH4(+) + ATP = L-glutamine + ADP + phosphate + H(+). Its activity is regulated as follows. The activity of this enzyme could be controlled by adenylation under conditions of abundant glutamine. Its function is as follows. Catalyzes the ATP-dependent biosynthesis of glutamine from glutamate and ammonia. This is Glutamine synthetase from Frankia alni.